A 3122-amino-acid chain; its full sequence is DNA polymerase zeta catalytic subunit (3122 aa).

Disordered stretches follow at residues 270–289 (QRRR…SQDC), 425–457 (GYQG…NEPQ), 487–509 (LCRN…EMEW), 524–545 (LDGT…RAHS), and 842–886 (TSTK…TFEN). The segment covering 277–286 (ESSQISQPES) has biased composition (polar residues). The segment covering 497–509 (EEDDSSSEEEMEW) has biased composition (acidic residues). 2 stretches are compositionally biased toward polar residues: residues 533 to 545 (DNPL…RAHS) and 842 to 860 (TSTK…THND). A Phosphoserine modification is found at Ser1029. Disordered regions lie at residues 1034 to 1075 (YPIY…TLSF), 1154 to 1285 (VYNT…PTGI), 1429 to 1453 (VSVS…ESQT), 1538 to 1616 (KAQS…LSDD), 1842 to 1869 (NDVL…SFTP), 1959 to 1979 (NPRP…ESSN), and 2091 to 2138 (AAVP…RHSS). Thr1040 is subject to Phosphothreonine. Composition is skewed to basic residues over residues 1042–1063 (KKSH…KQHR) and 1166–1179 (KASR…KSKA). Basic and acidic residues predominate over residues 1215–1239 (RANEKSLSRKHAIPADEKMKPHSEA). Over residues 1243–1270 (PNHQSVSELTSSSGAQALSKQKEMSQTG) the composition is skewed to polar residues. Low complexity predominate over residues 1429–1440 (VSVSEQSKTSET). 2 stretches are compositionally biased toward polar residues: residues 1441 to 1453 (CSPG…ESQT) and 1538 to 1561 (KAQS…ISVS). A compositionally biased stretch (basic residues) spans 1566–1587 (KANKRTRPVTSPRKPRTPRRTK). Positions 1588-1598 (PKEQTPRRLKV) are enriched in basic and acidic residues. A compositionally biased stretch (polar residues) spans 1602-1615 (NLQTSGHLDNSLSD). The interval 1844–1895 (VLTPTPDSSPRSTSSPLQSKNGSFTPRTAHILKPLMSPPSREEIVATLLDHD) is mediates interaction with MAD2L2. The segment covering 1846–1859 (TPTPDSSPRSTSSP) has biased composition (low complexity). The segment covering 1860 to 1869 (LQSKNGSFTP) has biased composition (polar residues). Ser1964 is subject to Phosphoserine. Residues Cys3034, Cys3037, Cys3046, and Cys3049 each coordinate Zn(2+). Residues 3034–3049 (CPVCDDLTQHGICSKC) form a CysA-type zinc finger. [4Fe-4S] cluster contacts are provided by Cys3078, Cys3081, Cys3091, and Cys3096. Positions 3078-3096 (CRNCTGSFDRHIPCVSLNC) match the CysB motif motif.

It belongs to the DNA polymerase type-B family. In terms of assembly, heterodimer with MAD2L2. This dimer forms the minimal DNA polymerase zeta complex (Pol-zeta2), with REV3L bearing DNA polymerase catalytic activity, although its activity is very low in this context. Component of the tetrameric Pol-zeta complex (Pol-zeta4), which consists of REV3L, MAD2L2, POLD2 and POLD3; Pol-zeta4 is the fully active form of DNA polymerase zeta. [4Fe-4S] cluster is required as a cofactor.

Its subcellular location is the nucleus. The catalysed reaction is DNA(n) + a 2'-deoxyribonucleoside 5'-triphosphate = DNA(n+1) + diphosphate. Its function is as follows. Catalytic subunit of the DNA polymerase zeta complex, an error-prone polymerase specialized in translesion DNA synthesis (TLS). Lacks an intrinsic 3'-5' exonuclease activity and thus has no proofreading function. The protein is DNA polymerase zeta catalytic subunit (Rev3l) of Mus musculus (Mouse).